A 1337-amino-acid chain; its full sequence is ATP-dependent helicase/nuclease subunit A (1337 aa).

Positions 3 to 484 constitute a UvrD-like helicase ATP-binding domain; sequence FTPSKEQEPA…LDLSDNYRSR (482 aa). 24-31 is an ATP binding site; the sequence is ASAGSGKT. The UvrD-like helicase C-terminal domain occupies 522-867; the sequence is ADRDQASPAT…NVMTIHKSKG (346 aa).

This sequence belongs to the helicase family. AddA subfamily. In terms of assembly, heterodimer of AddA and AddB/RexB. Mg(2+) serves as cofactor.

It catalyses the reaction Couples ATP hydrolysis with the unwinding of duplex DNA by translocating in the 3'-5' direction.. The catalysed reaction is ATP + H2O = ADP + phosphate + H(+). The heterodimer acts as both an ATP-dependent DNA helicase and an ATP-dependent, dual-direction single-stranded exonuclease. Recognizes the chi site generating a DNA molecule suitable for the initiation of homologous recombination. The AddA nuclease domain is required for chi fragment generation; this subunit has the helicase and 3' -&gt; 5' nuclease activities. This Limosilactobacillus fermentum (strain NBRC 3956 / LMG 18251) (Lactobacillus fermentum) protein is ATP-dependent helicase/nuclease subunit A.